A 56-amino-acid chain; its full sequence is Secreted virulence factor CLU5a (56 aa).

An N-terminal signal peptide occupies residues 1 to 18 (MKVSLTLLATLCASLASA).

The protein belongs to the MC69 virulence factor family. In terms of assembly, homodimer; disulfide-linked. Dimerization can possibly extend to multimerisation.

Its subcellular location is the secreted. Secreted protein required for appressorial penetration of intact host epidermal cells and for pathogenicit, but not for subsequent biotrophic and necrotrophic colonization of leaves. The polypeptide is Secreted virulence factor CLU5a (Colletotrichum graminicola (strain M1.001 / M2 / FGSC 10212) (Maize anthracnose fungus)).